The chain runs to 106 residues: uncharacterized protein (106 aa).

Residues 24–35 (ANSISSTSFYHK) show a composition bias toward polar residues. Disordered stretches follow at residues 24–49 (ANSI…SCEE) and 65–87 (LTAE…SSDE). Low complexity-rich tracts occupy residues 36–46 (SSNNNSHANAS) and 74–85 (SLSASNQPASSS).

This is an uncharacterized protein from Arabidopsis thaliana (Mouse-ear cress).